The chain runs to 699 residues: Glutamine--fructose-6-phosphate aminotransferase [isomerizing] (699 aa).

The active-site Nucleophile is the Cys2. Residues 2–303 (CGIFGYANFS…DNDIVHISNG (302 aa)) enclose the Glutamine amidotransferase type-2 domain. 2 consecutive SIS domains span residues 377-516 (HVSG…QNLV) and 544-689 (SVKS…ADFP).

It carries out the reaction D-fructose 6-phosphate + L-glutamine = D-glucosamine 6-phosphate + L-glutamate. Its pathway is nucleotide-sugar biosynthesis; UDP-N-acetyl-alpha-D-glucosamine biosynthesis; alpha-D-glucosamine 6-phosphate from D-fructose 6-phosphate: step 1/1. Functionally, involved in amino sugar synthesis (formation of chitin, supplies the amino sugars of asparagine-linked oligosaccharides of glycoproteins). The polypeptide is Glutamine--fructose-6-phosphate aminotransferase [isomerizing] (GFA1) (Encephalitozoon cuniculi (strain GB-M1) (Microsporidian parasite)).